The sequence spans 202 residues: Peptidyl-tRNA hydrolase (202 aa).

Tyrosine 14 is a tRNA binding site. The Proton acceptor role is filled by histidine 19. Positions 64, 66, and 112 each coordinate tRNA.

This sequence belongs to the PTH family. In terms of assembly, monomer.

Its subcellular location is the cytoplasm. It catalyses the reaction an N-acyl-L-alpha-aminoacyl-tRNA + H2O = an N-acyl-L-amino acid + a tRNA + H(+). In terms of biological role, hydrolyzes ribosome-free peptidyl-tRNAs (with 1 or more amino acids incorporated), which drop off the ribosome during protein synthesis, or as a result of ribosome stalling. Its function is as follows. Catalyzes the release of premature peptidyl moieties from peptidyl-tRNA molecules trapped in stalled 50S ribosomal subunits, and thus maintains levels of free tRNAs and 50S ribosomes. The protein is Peptidyl-tRNA hydrolase of Nitrobacter winogradskyi (strain ATCC 25391 / DSM 10237 / CIP 104748 / NCIMB 11846 / Nb-255).